The sequence spans 349 residues: Ferredoxin--NADP reductase 1 (349 aa).

E36, K44, Y48, V88, L123, D290, and S331 together coordinate FAD.

The protein belongs to the ferredoxin--NADP reductase type 2 family. As to quaternary structure, homodimer. It depends on FAD as a cofactor.

It catalyses the reaction 2 reduced [2Fe-2S]-[ferredoxin] + NADP(+) + H(+) = 2 oxidized [2Fe-2S]-[ferredoxin] + NADPH. This Lysinibacillus sphaericus (strain C3-41) protein is Ferredoxin--NADP reductase 1.